The sequence spans 181 residues: ATP synthase subunit delta (181 aa).

The protein belongs to the ATPase delta chain family. In terms of assembly, F-type ATPases have 2 components, F(1) - the catalytic core - and F(0) - the membrane proton channel. F(1) has five subunits: alpha(3), beta(3), gamma(1), delta(1), epsilon(1). F(0) has three main subunits: a(1), b(2) and c(10-14). The alpha and beta chains form an alternating ring which encloses part of the gamma chain. F(1) is attached to F(0) by a central stalk formed by the gamma and epsilon chains, while a peripheral stalk is formed by the delta and b chains.

The protein resides in the cell inner membrane. Its function is as follows. F(1)F(0) ATP synthase produces ATP from ADP in the presence of a proton or sodium gradient. F-type ATPases consist of two structural domains, F(1) containing the extramembraneous catalytic core and F(0) containing the membrane proton channel, linked together by a central stalk and a peripheral stalk. During catalysis, ATP synthesis in the catalytic domain of F(1) is coupled via a rotary mechanism of the central stalk subunits to proton translocation. In terms of biological role, this protein is part of the stalk that links CF(0) to CF(1). It either transmits conformational changes from CF(0) to CF(1) or is implicated in proton conduction. In Syntrophus aciditrophicus (strain SB), this protein is ATP synthase subunit delta.